A 276-amino-acid polypeptide reads, in one-letter code: NAD-capped RNA hydrolase NudC (276 aa).

Arg82 contributes to the substrate binding site. Zn(2+)-binding residues include Cys112 and Cys115. Glu125 provides a ligand contact to substrate. Cys130 and Cys133 together coordinate Zn(2+). Position 138 (Tyr138) interacts with substrate. The Nudix hydrolase domain occupies 139–262; sequence PRLSPSMIVL…SIARYLIELY (124 aa). Residues Ala172, Glu188, and Glu192 each contribute to the a divalent metal cation site. A Nudix box motif is present at residues 173 to 194; that stretch reads GYVEPGESVEQCVAREVREEVG. 206–213 serves as a coordination point for substrate; sequence QGWPFPHS. Glu233 provides a ligand contact to a divalent metal cation. Ala255 is a binding site for substrate.

The protein belongs to the Nudix hydrolase family. NudC subfamily. Homodimer. The cofactor is Mg(2+). Requires Mn(2+) as cofactor. Zn(2+) serves as cofactor.

It catalyses the reaction a 5'-end NAD(+)-phospho-ribonucleoside in mRNA + H2O = a 5'-end phospho-adenosine-phospho-ribonucleoside in mRNA + beta-nicotinamide D-ribonucleotide + 2 H(+). The enzyme catalyses NAD(+) + H2O = beta-nicotinamide D-ribonucleotide + AMP + 2 H(+). It carries out the reaction NADH + H2O = reduced beta-nicotinamide D-ribonucleotide + AMP + 2 H(+). In terms of biological role, mRNA decapping enzyme that specifically removes the nicotinamide adenine dinucleotide (NAD) cap from a subset of mRNAs by hydrolyzing the diphosphate linkage to produce nicotinamide mononucleotide (NMN) and 5' monophosphate mRNA. The NAD-cap is present at the 5'-end of some mRNAs and stabilizes RNA against 5'-processing. Has preference for mRNAs with a 5'-end purine. Catalyzes the hydrolysis of a broad range of dinucleotide pyrophosphates. The chain is NAD-capped RNA hydrolase NudC from Stutzerimonas stutzeri (strain A1501) (Pseudomonas stutzeri).